Consider the following 175-residue polypeptide: Urease accessory protein UreE (175 aa).

Residues 134-175 are disordered; the sequence is FQPESGAYGGGHHHGDESATDLHNPGHGPHRSVPKIHEFKPR.

This sequence belongs to the UreE family.

It is found in the cytoplasm. In terms of biological role, involved in urease metallocenter assembly. Binds nickel. Probably functions as a nickel donor during metallocenter assembly. This chain is Urease accessory protein UreE, found in Dechloromonas aromatica (strain RCB).